The following is a 1070-amino-acid chain: DNA-directed RNA polymerase subunit beta (1070 aa).

The protein belongs to the RNA polymerase beta chain family. As to quaternary structure, in plastids the minimal PEP RNA polymerase catalytic core is composed of four subunits: alpha, beta, beta', and beta''. When a (nuclear-encoded) sigma factor is associated with the core the holoenzyme is formed, which can initiate transcription.

It is found in the plastid. Its subcellular location is the chloroplast. The enzyme catalyses RNA(n) + a ribonucleoside 5'-triphosphate = RNA(n+1) + diphosphate. In terms of biological role, DNA-dependent RNA polymerase catalyzes the transcription of DNA into RNA using the four ribonucleoside triphosphates as substrates. The chain is DNA-directed RNA polymerase subunit beta from Silene latifolia (White campion).